A 578-amino-acid chain; its full sequence is Solute carrier family 15 member 3 (578 aa).

A compositionally biased stretch (basic and acidic residues) spans 1 to 15 (MSAPRAEEQPSRSGE). The disordered stretch occupies residues 1-27 (MSAPRAEEQPSRSGERQPLVARGPRGP). The next 5 membrane-spanning stretches (helical) occupy residues 33 to 53 (TAAA…FGVT), 77 to 97 (LLFL…ADVY), 102 to 122 (LTIS…LTTI), 155 to 175 (PYCA…ASSV), and 201 to 221 (WFYW…AFIE). The N-linked (GlcNAc...) asparagine glycan is linked to Asn223. A helical transmembrane segment spans residues 232–252 (IIVGLVGLAFFIFLFATPVFI). A disordered region spans residues 280–301 (SRDSESAHLLPDQRSNQPGPSP). The helical transmembrane segment at 308–328 (FQVLVKILPVMVTLVPYWMVY) threads the bilayer. N-linked (GlcNAc...) asparagine glycosylation occurs at Asn353. The next 2 membrane-spanning stretches (helical) occupy residues 367–387 (IPEA…IPVK) and 405–425 (LQKM…AGVL). Asn436 carries N-linked (GlcNAc...) asparagine glycosylation. The next 3 membrane-spanning stretches (helical) occupy residues 462 to 481 (YLLI…EFAY), 494 to 514 (GIFF…VALL), and 538 to 558 (YFFL…WIAG).

The protein belongs to the major facilitator superfamily. Proton-dependent oligopeptide transporter (POT/PTR) (TC 2.A.17) family. Expressed highly in bone marrow derived macrophages, and weakly in spleen and lung. Expressed in plasmacytoid dendritic cells (pDCs) in response to toll-like receptors (TLR) stimulation.

It localises to the lysosome membrane. The protein resides in the endosome membrane. The enzyme catalyses N-acetyl-D-muramoyl-L-alanyl-D-isoglutamine(out) + n H(+)(out) = N-acetyl-D-muramoyl-L-alanyl-D-isoglutamine(in) + n H(+)(in). It catalyses the reaction glycylglycylglycine(out) + n H(+)(out) = glycylglycylglycine(in) + n H(+)(in). The catalysed reaction is carnosine(out) + n H(+)(out) = carnosine(in) + n H(+)(in). It carries out the reaction L-histidine(out) + n H(+)(out) = L-histidine(in) + n H(+)(in). Its function is as follows. Proton-coupled amino-acid transporter that transports free histidine and certain di- and tripeptides, and is involved in innate immune response. Also able to transport carnosine. Involved in the detection of microbial pathogens by toll-like receptors (TLRs) and NOD-like receptors (NLRs), probably by mediating transport of bacterial peptidoglycans across the endolysosomal membrane: catalyzes the transport of certain bacterial peptidoglycans, such as muramyl dipeptide (MDP), the NOD2 ligand. The polypeptide is Solute carrier family 15 member 3 (Mus musculus (Mouse)).